A 122-amino-acid chain; its full sequence is Holo-[acyl-carrier-protein] synthase (122 aa).

Mg(2+) is bound by residues Asp8 and Glu55.

Belongs to the P-Pant transferase superfamily. AcpS family. Mg(2+) is required as a cofactor.

It is found in the cytoplasm. The enzyme catalyses apo-[ACP] + CoA = holo-[ACP] + adenosine 3',5'-bisphosphate + H(+). Transfers the 4'-phosphopantetheine moiety from coenzyme A to a Ser of acyl-carrier-protein. The protein is Holo-[acyl-carrier-protein] synthase of Fusobacterium nucleatum subsp. nucleatum (strain ATCC 25586 / DSM 15643 / BCRC 10681 / CIP 101130 / JCM 8532 / KCTC 2640 / LMG 13131 / VPI 4355).